The chain runs to 517 residues: Peptide chain release factor 3 (517 aa).

A tr-type G domain is found at 9-269 (AKRRTFAIIS…DFVEHAPAPR (261 aa)). GTP-binding positions include 18 to 25 (SHPDAGKT), 86 to 90 (DTPGH), and 140 to 143 (NKLD).

The protein belongs to the TRAFAC class translation factor GTPase superfamily. Classic translation factor GTPase family. PrfC subfamily.

It is found in the cytoplasm. Its function is as follows. Increases the formation of ribosomal termination complexes and stimulates activities of RF-1 and RF-2. It binds guanine nucleotides and has strong preference for UGA stop codons. It may interact directly with the ribosome. The stimulation of RF-1 and RF-2 is significantly reduced by GTP and GDP, but not by GMP. This chain is Peptide chain release factor 3, found in Halorhodospira halophila (strain DSM 244 / SL1) (Ectothiorhodospira halophila (strain DSM 244 / SL1)).